The primary structure comprises 577 residues: 2-succinyl-5-enolpyruvyl-6-hydroxy-3-cyclohexene-1-carboxylate synthase (577 aa).

This sequence belongs to the TPP enzyme family. MenD subfamily. Homodimer. Requires Mg(2+) as cofactor. Mn(2+) is required as a cofactor. The cofactor is thiamine diphosphate.

It carries out the reaction isochorismate + 2-oxoglutarate + H(+) = 5-enolpyruvoyl-6-hydroxy-2-succinyl-cyclohex-3-ene-1-carboxylate + CO2. It participates in quinol/quinone metabolism; 1,4-dihydroxy-2-naphthoate biosynthesis; 1,4-dihydroxy-2-naphthoate from chorismate: step 2/7. It functions in the pathway quinol/quinone metabolism; menaquinone biosynthesis. Functionally, catalyzes the thiamine diphosphate-dependent decarboxylation of 2-oxoglutarate and the subsequent addition of the resulting succinic semialdehyde-thiamine pyrophosphate anion to isochorismate to yield 2-succinyl-5-enolpyruvyl-6-hydroxy-3-cyclohexene-1-carboxylate (SEPHCHC). This is 2-succinyl-5-enolpyruvyl-6-hydroxy-3-cyclohexene-1-carboxylate synthase from Geobacillus kaustophilus (strain HTA426).